A 254-amino-acid chain; its full sequence is Probable 2,4-dienoyl-CoA reductase [(2E)-enoyl-CoA-producing] (254 aa).

Position 6 to 38 (6 to 38 (VIITGGSSGMGKAMAKKQAELGWHVMVTGRNHE)) interacts with NADP(+). Thr100 serves as a coordination point for substrate. Tyr142 functions as the Proton acceptor in the catalytic mechanism. An NAD(+)-binding site is contributed by Lys157.

This sequence belongs to the short-chain dehydrogenases/reductases (SDR) family. 2,4-dienoyl-CoA reductase subfamily.

The enzyme catalyses a 4,5-saturated-(2E)-enoyl-CoA + NADP(+) = a (2E,4E)-dienoyl-CoA + NADPH + H(+). It carries out the reaction a (2E,4Z)-dienoyl-CoA + NADPH + H(+) = a 4,5-saturated-(2E)-enoyl-CoA + NADP(+). Its pathway is lipid metabolism; fatty acid beta-oxidation. In terms of biological role, auxiliary enzyme of beta-oxidation. It participates in the metabolism of unsaturated fatty enoyl-CoA esters having double bonds in both even- and odd-numbered positions. Catalyzes the NADP-dependent reduction of 2,4-dienoyl-CoA to yield trans-3-enoyl-CoA. The chain is Probable 2,4-dienoyl-CoA reductase [(2E)-enoyl-CoA-producing] (fadH) from Bacillus subtilis (strain 168).